Reading from the N-terminus, the 305-residue chain is tRNA pseudouridine synthase B (305 aa).

Catalysis depends on Asp-39, which acts as the Nucleophile.

This sequence belongs to the pseudouridine synthase TruB family. Type 1 subfamily.

It carries out the reaction uridine(55) in tRNA = pseudouridine(55) in tRNA. Functionally, responsible for synthesis of pseudouridine from uracil-55 in the psi GC loop of transfer RNAs. This Staphylococcus saprophyticus subsp. saprophyticus (strain ATCC 15305 / DSM 20229 / NCIMB 8711 / NCTC 7292 / S-41) protein is tRNA pseudouridine synthase B.